The primary structure comprises 415 residues: MSTPDRRRAVVTGLSVAAPGGLGTERYWKSLLTGENGIAELSRFDASRYPSRLAGQIDDFEASEHLPSRLLPQTDVSTRYALAAADWALADAGVGPESGLDDYDLGVVTSTAQGGFDFTHREFHKLWSQGPAYVSVYESFAWFYAVNTGQISIRNTMRGPSAALVGEQAGGLDAIGHARRTVRRGPGWCSAVASTRRSTRGASSSQLSGGLVSTVADPERAYLPFDVDASGYVPGEGGAVLIVEDADSARARGAERIYVRSPLRRDPAPGSGRPPALGRAAELALAEAGLTPADISVVFADGAGVPELDRAEADTLARLFGPRGVPVTAPKALTGRLCAGGGPADLAAALLALRDQVIPATGRHRAVPDAYALDLVTGRPREAALSAALVLARGRHGFNSAVVVTLRGSDHRRPT.

The region spanning 6 to 406 (RRRAVVTGLS…GFNSAVVVTL (401 aa)) is the Ketosynthase family 3 (KS3) domain.

The protein belongs to the thiolase-like superfamily. Beta-ketoacyl-ACP synthases family.

Its pathway is antibiotic biosynthesis; granaticin biosynthesis. The polypeptide is Granaticin polyketide putative beta-ketoacyl synthase 2 (gra-orf2) (Streptomyces violaceoruber).